We begin with the raw amino-acid sequence, 64 residues long: MNNPNIVPPHFNQHQQQNHNQNQPPHHMNNPNIIPPPQRFNNSNVVPHFNQLSNQNQPPQRPQY.

Residues 1–64 (MNNPNIVPPH…QNQPPQRPQY (64 aa)) form a disordered region. A compositionally biased stretch (low complexity) spans 8–32 (PPHFNQHQQQNHNQNQPPHHMNNPN).

This is an uncharacterized protein from Dictyostelium discoideum (Social amoeba).